The sequence spans 532 residues: Undecaprenyl-phosphate glucose phosphotransferase (532 aa).

5 consecutive transmembrane segments (helical) span residues 81-101, 110-130, 155-175, 183-203, and 344-364; these read QVVV…CIAW, ELSG…FLFP, VAFG…PFGV, WLTF…YILH, and TASV…ALAI.

This sequence belongs to the bacterial sugar transferase family.

The protein resides in the membrane. It carries out the reaction di-trans,octa-cis-undecaprenyl phosphate + UDP-alpha-D-glucose = alpha-D-glucosyl di-trans,octa-cis-undecaprenyl diphosphate + UMP. Functionally, involved in the biosynthesis of the exopolysaccharide acetan, a water-soluble polysaccharide involved in production of bacterial cellulose (BC). This Komagataeibacter xylinus (Gluconacetobacter xylinus) protein is Undecaprenyl-phosphate glucose phosphotransferase (aceA).